Here is a 278-residue protein sequence, read N- to C-terminus: MAVAIDGKRVSEELRKELKNFIDERVEKGLKVPCVSSILIGNDKGSLFYIKNQRRICKEIGIEFKNIVLEENIEEDKIIEVIEDLNKDENVHGIILQMPLPKTLDEEKIVNKICPSKDIDGLTDINAGRFYKGEKCFIPCTAQGIIEIIKSTKESISGKKAVVLGRSVIVGKPVAQLLVNEDATVTICHSKTKDIKSLCKEADIIVSAMGIPKFVKEDFIKDGAIVIDVGFSVLDGKMVGDIDYDNVFKKAGFITPVPGGVGSVTPTMLIKNLCEVFK.

NADP(+) contacts are provided by residues 165–167 (GRS) and Ser-190.

This sequence belongs to the tetrahydrofolate dehydrogenase/cyclohydrolase family. In terms of assembly, homodimer.

It carries out the reaction (6R)-5,10-methylene-5,6,7,8-tetrahydrofolate + NADP(+) = (6R)-5,10-methenyltetrahydrofolate + NADPH. The catalysed reaction is (6R)-5,10-methenyltetrahydrofolate + H2O = (6R)-10-formyltetrahydrofolate + H(+). It functions in the pathway one-carbon metabolism; tetrahydrofolate interconversion. Its function is as follows. Catalyzes the oxidation of 5,10-methylenetetrahydrofolate to 5,10-methenyltetrahydrofolate and then the hydrolysis of 5,10-methenyltetrahydrofolate to 10-formyltetrahydrofolate. This chain is Bifunctional protein FolD, found in Clostridium tetani (strain Massachusetts / E88).